The sequence spans 335 residues: DNA-directed RNA polymerases I and III subunit RPAC1 (335 aa).

Ser-2 is modified (N-acetylserine). Position 17 is a phosphoserine (Ser-17).

It belongs to the archaeal Rpo3/eukaryotic RPB3 RNA polymerase subunit family. In terms of assembly, component of the RNA polymerase I (Pol I) complex consisting of 14 subunits: RPA135, RPA190, RPC40, RPA14, RPB5, RPO26, RPA43, RPB8, RPA12, RPB10, RPC19, RPC10, RPA49 and RPA34. The complex is composed of a horseshoe-shaped core containing ten subunits (RPA135, RPA190, RPB5, RPO26, RPB8, RPB10, RPC10, RPA12, RPC19 and RPC40) where RPA135 and RPA190 form the DNA-binding cleft. Outside of the core, RPA14 and RPA43 form the stalk that mediates interactions with transcription initiation factors and newly synthesized RNA. Component of the RNA polymerase III (Pol III) complex consisting of at least 17 subunits. Interacts with the RPC19/RPAC2 and RPC53/RPC4. Interacts with retrotransposons Ty integrase, targeting Ty1, Ty2 and Ty4 integration upstream of pol III-transcribed genes.

It is found in the nucleus. Its subcellular location is the nucleolus. Its function is as follows. DNA-dependent RNA polymerases catalyze the transcription of DNA into RNA using the four ribonucleoside triphosphates as substrates. Common component of RNA polymerases I (Pol I) and III (Pol III) which synthesize ribosomal RNA precursors and small RNAs, such as 5S rRNA and tRNAs, respectively. RPC40 is part of the polymerase core and may function as a clamp element that moves to open and close the cleft. Plays an important role in targeting retrotransposons Ty integration upstream of pol III-transcribed genes such as tRNA genes, allowing Ty1, Ty2 and Ty4 to proliferate and yet minimizing genetic damage. The chain is DNA-directed RNA polymerases I and III subunit RPAC1 from Saccharomyces cerevisiae (strain ATCC 204508 / S288c) (Baker's yeast).